We begin with the raw amino-acid sequence, 649 residues long: Leucine-rich repeat transmembrane protein FLRT3 (649 aa).

The N-terminal stretch at 1-28 (MISPAWSLFLIGTKIGLFFQVAPLSVMA) is a signal peptide. The region spanning 29–58 (KSCPSVCRCDAGFIYCNDRSLTSIPVGIPE) is the LRRNT domain. The Extracellular segment spans residues 29 to 528 (KSCPSVCRCD…KEPYKNPNLP (500 aa)). 2 disulfide bridges follow: Cys-31–Cys-37 and Cys-35–Cys-44. The segment at 38-67 (DAGFIYCNDRSLTSIPVGIPEDATTLYLQN) is interaction with ADGRL3. 10 LRR repeats span residues 59–80 (DATTLYLQNNQINNVGIPSDLK), 84–104 (KVQRIYLYHNSLDEFPTNLPK), 105–126 (YVKELHLQENNIRTITYDSLSK), 129–150 (YLEELHLDDNSVSAVSIEEGAF), 155–176 (YLRLLFLSRNHLSTIPGGLPRT), 177–197 (IEELRLDDNRISTISSPSLHG), 200–220 (SLKRLVLDGNLLNNHGLGDKV), 226–247 (NLTELSLVRNSLTAAPVNLPGT), 248–269 (SLRKLYLQDNHINRVPPNAFSY), and 272–293 (QLYRLDMSNNNLSNLPQGIFDD). An N-linked (GlcNAc...) asparagine glycan is attached at Asn-226. Residues Asn-282 and Asn-296 are each glycosylated (N-linked (GlcNAc...) asparagine). Residues 305 to 357 (NPWYCGCKMKWVRDWLQSLPVKVNVRGLMCQAPEKVRGMAIKDLSAELFDCKD) form the LRRCT domain. An intrachain disulfide couples Cys-309 to Cys-334. The tract at residues 378-405 (QGQWPAPVTKQPDIKNPKLTKDQRTTGS) is disordered. Positions 389–401 (PDIKNPKLTKDQR) are enriched in basic and acidic residues. Residues 405 to 504 (SPSRKTILIT…VCIETQTAPL (100 aa)) form the Fibronectin type-III domain. Residues 529-549 (LAAIIGGAVALVSIALLALVC) form a helical membrane-spanning segment. The Cytoplasmic portion of the chain corresponds to 550-649 (WYVHRNGSLF…GIPDLDHSHS (100 aa)). The tract at residues 629–649 (ESSSNRSYRDSGIPDLDHSHS) is disordered.

In terms of assembly, monomer and homodimer. Self-associates (via leucine-rich repeats), giving rise to homooligomers. Interacts with FGFR1. Interacts (via extracellular domain) with ADGRL1/LPHN1 and ADGRL3 (via olfactomedin-like domain). Interacts (via extracellular domain) with LPHN2 (via olfactomedin-like domain). Interacts (via extracellular domain) with UNC5B (via Ig domain). May also interact (via extracellular domain) with UNC5A and UNC5C. Interacts (via extracellular domain) with UNC5D (via extracellular domain). Identified in complexes composed of FLRT3, ADGRL3 and UNC5B, respectively FLRT3, ADGRL3 and UNC5D. Interacts (via cytoplasmic domain) with ROBO1. Post-translationally, N-glycosylated. Proteolytic cleavage in the juxtamembrane region gives rise to a soluble ectodomain. Cleavage is probably effected by a metalloprotease. As to expression, detected in brain (at protein level). Detected in brain neurons, especially in basal ganglia, hippocampus dentate gyrus and CA3 region, cerebellum and in olfactory bulb.

Its subcellular location is the cell membrane. The protein resides in the presynaptic cell membrane. The protein localises to the synapse. It localises to the synaptosome. It is found in the postsynaptic density. Its subcellular location is the cell projection. The protein resides in the dendrite. The protein localises to the axon. It localises to the growth cone membrane. It is found in the cytoplasmic vesicle. Its subcellular location is the endoplasmic reticulum membrane. The protein resides in the cell junction. The protein localises to the focal adhesion. It localises to the secreted. Functionally, functions in cell-cell adhesion, cell migration and axon guidance, exerting an attractive or repulsive role depending on its interaction partners. Plays a role in the spatial organization of brain neurons. Plays a role in vascular development in the retina. Plays a role in cell-cell adhesion via its interaction with ADGRL3 and probably also other latrophilins that are expressed at the surface of adjacent cells. Interaction with the intracellular domain of ROBO1 mediates axon attraction towards cells expressing NTN1. Mediates axon growth cone collapse and plays a repulsive role in neuron guidance via its interaction with UNC5B, and possibly also other UNC-5 family members. Promotes neurite outgrowth (in vitro). Mediates cell-cell contacts that promote an increase both in neurite number and in neurite length. Plays a role in the regulation of the density of glutamaergic synapses. Plays a role in fibroblast growth factor-mediated signaling cascades. Required for normal morphogenesis during embryonic development, but not for normal embryonic patterning. Required for normal ventral closure, headfold fusion and definitive endoderm migration during embryonic development. Required for the formation of a normal basement membrane and the maintenance of a normal anterior visceral endoderm during embryonic development. The sequence is that of Leucine-rich repeat transmembrane protein FLRT3 (Flrt3) from Rattus norvegicus (Rat).